The chain runs to 550 residues: Arginine--tRNA ligase (550 aa).

Residues 130 to 140 (ANPTGPIHLGG) carry the 'HIGH' region motif.

This sequence belongs to the class-I aminoacyl-tRNA synthetase family. In terms of assembly, monomer.

The protein localises to the cytoplasm. The catalysed reaction is tRNA(Arg) + L-arginine + ATP = L-arginyl-tRNA(Arg) + AMP + diphosphate. This Rhodococcus jostii (strain RHA1) protein is Arginine--tRNA ligase.